An 897-amino-acid polypeptide reads, in one-letter code: Cytokine receptor common subunit beta (897 aa).

An N-terminal signal peptide occupies residues 1 to 16 (MVLAQGLLSMALLALC). Residues 17-443 (WERSLAGAEE…WDTESVLPMW (427 aa)) lie on the Extracellular side of the membrane. Residues Cys35 and Cys45 are joined by a disulfide bond. Residue Asn58 is glycosylated (N-linked (GlcNAc...) asparagine). 2 disulfides stabilise this stretch: Cys75/Cys96 and Cys86/Cys91. In terms of domain architecture, Fibronectin type-III 1 spans 133-240 (PPEPRDLQIS…PEVCWDSQPG (108 aa)). A glycan (N-linked (GlcNAc...) asparagine) is linked at Asn191. Cystine bridges form between Cys250–Cys260 and Cys289–Cys306. A Fibronectin type-III 2 domain is found at 339–436 (QMAPPSLNVT…EWSEARSWDT (98 aa)). Asn346 is a glycosylation site (N-linked (GlcNAc...) asparagine). The WSXWS motif motif lies at 425–429 (WSEWS). A helical membrane pass occupies residues 444–460 (VLALIVIFLTIAVLLAL). The Cytoplasmic segment spans residues 461–897 (RFCGIYGYRL…WEVNKPGEVC (437 aa)). Positions 474-482 (WEEKIPNPS) match the Box 1 motif motif. Disordered regions lie at residues 498-517 (GSMSAFTSGSPPHQGPWGSR), 532-630 (SEVS…EYLC), 648-812 (PGQA…QPEG), and 830-849 (PGPLSLRSKPSSPGPGPEIK). The span at 564 to 574 (EQPPSPQPGPP) shows a compositional bias: pro residues. A compositionally biased stretch (low complexity) spans 723–752 (SGASSVSLVPSLGLPSDQTPSLCPGLASGP). Residue Tyr766 is modified to Phosphotyrosine. Residues 830-840 (PGPLSLRSKPS) show a composition bias toward low complexity.

Belongs to the type I cytokine receptor family. Type 4 subfamily. Heterodimer of an alpha and a beta subunit. The beta subunit is common to the IL3, IL5 and GM-CSF receptors. The signaling GM-CSF receptor complex is a dodecamer of two head-to-head hexamers of two alpha, two beta, and two ligand subunits. Interacts with TMEM102; this interaction occurs preferentially in the absence of CSF2. Interacts with FCER1G; this interaction is direct. Interacts with LYN. Interacts with JAK1. Post-translationally, may be phosphorylated by LYN.

It localises to the membrane. Functionally, cell surface receptor that plays a role in immune response and controls the production and differentiation of hematopoietic progenitor cells into lineage-restricted cells. Acts by forming an heterodimeric receptor through interaction with different partners such as IL3RA, IL5RA or CSF2RA. In turn, participates in various signaling pathways including interleukin-3, interleukin-5 and granulocyte-macrophage colony-stimulating factor/CSF2 pathways. In unstimulated conditions, interacts constitutively with JAK1 and ligand binding leads to JAK1 stimulation and subsequent activation of the JAK-STAT pathway. This is Cytokine receptor common subunit beta (CSF2RB) from Homo sapiens (Human).